The chain runs to 336 residues: 4-hydroxy-3-methylbut-2-enyl diphosphate reductase (336 aa).

Cysteine 37 lines the [4Fe-4S] cluster pocket. Residues histidine 66 and histidine 99 each contribute to the (2E)-4-hydroxy-3-methylbut-2-enyl diphosphate site. Residues histidine 66 and histidine 99 each contribute to the dimethylallyl diphosphate site. Residues histidine 66 and histidine 99 each contribute to the isopentenyl diphosphate site. A [4Fe-4S] cluster-binding site is contributed by cysteine 121. Histidine 149 is a (2E)-4-hydroxy-3-methylbut-2-enyl diphosphate binding site. Histidine 149 contributes to the dimethylallyl diphosphate binding site. An isopentenyl diphosphate-binding site is contributed by histidine 149. Glutamate 151 functions as the Proton donor in the catalytic mechanism. Threonine 189 serves as a coordination point for (2E)-4-hydroxy-3-methylbut-2-enyl diphosphate. Position 219 (cysteine 219) interacts with [4Fe-4S] cluster. Serine 247, serine 248, asparagine 249, and serine 292 together coordinate (2E)-4-hydroxy-3-methylbut-2-enyl diphosphate. The dimethylallyl diphosphate site is built by serine 247, serine 248, asparagine 249, and serine 292. Isopentenyl diphosphate contacts are provided by serine 247, serine 248, asparagine 249, and serine 292.

Belongs to the IspH family. The cofactor is [4Fe-4S] cluster.

It carries out the reaction isopentenyl diphosphate + 2 oxidized [2Fe-2S]-[ferredoxin] + H2O = (2E)-4-hydroxy-3-methylbut-2-enyl diphosphate + 2 reduced [2Fe-2S]-[ferredoxin] + 2 H(+). It catalyses the reaction dimethylallyl diphosphate + 2 oxidized [2Fe-2S]-[ferredoxin] + H2O = (2E)-4-hydroxy-3-methylbut-2-enyl diphosphate + 2 reduced [2Fe-2S]-[ferredoxin] + 2 H(+). It participates in isoprenoid biosynthesis; dimethylallyl diphosphate biosynthesis; dimethylallyl diphosphate from (2E)-4-hydroxy-3-methylbutenyl diphosphate: step 1/1. Its pathway is isoprenoid biosynthesis; isopentenyl diphosphate biosynthesis via DXP pathway; isopentenyl diphosphate from 1-deoxy-D-xylulose 5-phosphate: step 6/6. Functionally, catalyzes the conversion of 1-hydroxy-2-methyl-2-(E)-butenyl 4-diphosphate (HMBPP) into a mixture of isopentenyl diphosphate (IPP) and dimethylallyl diphosphate (DMAPP). Acts in the terminal step of the DOXP/MEP pathway for isoprenoid precursor biosynthesis. This Nocardia farcinica (strain IFM 10152) protein is 4-hydroxy-3-methylbut-2-enyl diphosphate reductase.